The sequence spans 491 residues: Ketol-acid reductoisomerase (NADP(+)) (491 aa).

The 194-residue stretch at 15–208 folds into the KARI N-terminal Rossmann domain; that stretch reads AQLGKCRFMG…GGHRAGVLES (194 aa). Residues 45–48, R68, R76, S78, and 108–110 each bind NADP(+); these read CGAQ and DKQ. The active site involves H132. G158 serves as a coordination point for NADP(+). KARI C-terminal knotted domains follow at residues 209-344 and 345-484; these read SFVA…TAPQ and YEGK…MTDM. Mg(2+) contacts are provided by D217, E221, E389, and E393. S414 is a binding site for substrate.

The protein belongs to the ketol-acid reductoisomerase family. It depends on Mg(2+) as a cofactor.

It catalyses the reaction (2R)-2,3-dihydroxy-3-methylbutanoate + NADP(+) = (2S)-2-acetolactate + NADPH + H(+). The catalysed reaction is (2R,3R)-2,3-dihydroxy-3-methylpentanoate + NADP(+) = (S)-2-ethyl-2-hydroxy-3-oxobutanoate + NADPH + H(+). The protein operates within amino-acid biosynthesis; L-isoleucine biosynthesis; L-isoleucine from 2-oxobutanoate: step 2/4. It participates in amino-acid biosynthesis; L-valine biosynthesis; L-valine from pyruvate: step 2/4. Its function is as follows. Involved in the biosynthesis of branched-chain amino acids (BCAA). Catalyzes an alkyl-migration followed by a ketol-acid reduction of (S)-2-acetolactate (S2AL) to yield (R)-2,3-dihydroxy-isovalerate. In the isomerase reaction, S2AL is rearranged via a Mg-dependent methyl migration to produce 3-hydroxy-3-methyl-2-ketobutyrate (HMKB). In the reductase reaction, this 2-ketoacid undergoes a metal-dependent reduction by NADPH to yield (R)-2,3-dihydroxy-isovalerate. This is Ketol-acid reductoisomerase (NADP(+)) from Shigella flexneri.